The sequence spans 617 residues: E3 ubiquitin-protein ligase ORTHRUS 1 (617 aa).

A PHD-type zinc finger spans residues 12–62; it reads DGVCMRCQVNPPSEETLTCGTCVTPWHVPCLLPESLASSTGEWECPDCSGV. The RING-type 1 zinc-finger motif lies at 129-169; sequence CSICIQLPERPITTPCGHNFCLKCFEKWAVGQGKLTCMICR. A YDG domain is found at 258–407; the sequence is TRKQGVLVGE…FKVCRYLFVR (150 aa). The RING-type 2 zinc finger occupies 495–552; sequence CQICREVLSLPVTTPCAHNFCKACLEAKFAGITQLRERSNGGRKLRAKKNIMTCPCCT. Residues 563–593 are a coiled coil; the sequence is QVNREMMEIIENFKKSEEEADASISEEEEEE. The tract at residues 575–617 is disordered; sequence FKKSEEEADASISEEEEEESEPPTKKIKMDNNSVGGSGTSLSA. The span at 580–595 shows a compositional bias: acidic residues; sequence EEADASISEEEEEESE. Polar residues predominate over residues 604–617; that stretch reads DNNSVGGSGTSLSA.

Expressed in inflorescences and leaves.

It localises to the nucleus. It carries out the reaction S-ubiquitinyl-[E2 ubiquitin-conjugating enzyme]-L-cysteine + [acceptor protein]-L-lysine = [E2 ubiquitin-conjugating enzyme]-L-cysteine + N(6)-ubiquitinyl-[acceptor protein]-L-lysine.. Its pathway is protein modification; protein ubiquitination. In terms of biological role, E3 ubiquitin-protein ligase. Participates in CpG methylation-dependent transcriptional regulation and epigenetic transcriptional silencing. Mediates ubiquitination with the E2 ubiquitin-conjugating enzymes UBC11, UBC8 and UBC8 homologs (e.g. UBC10, UBC11, UBC28 and UBC29) but not with UBC27, UBC30, UBC32, UBC34 and UBC36. Promotes methylation-mediated gene silencing leading, for example, to early flowering. Can bind to CpG, CpNpG, and CpNpN DNA motifs, with a strong preference for methylated forms, and with highest affinity for CpG substrate. The sequence is that of E3 ubiquitin-protein ligase ORTHRUS 1 (ORTH1) from Arabidopsis thaliana (Mouse-ear cress).